A 764-amino-acid chain; its full sequence is Ergosteryl-beta-glucosidase (764 aa).

Catalysis depends on E515, which acts as the Nucleophile. The interval H588–H629 is disordered. Phosphothreonine is present on T594. Residues P601–S622 are compositionally biased toward low complexity.

This sequence belongs to the glycosyl hydrolase 5 (cellulase A) family.

It is found in the cytoplasm. Its subcellular location is the cytosol. The protein localises to the vacuole membrane. The catalysed reaction is ergosteryl 3-beta-D-glucoside + H2O = ergosterol + D-glucose. Ergosteryl beta-glucosidase involved in the ergosteryl beta-glucoside (EG) catabolic pathway and vacuole formation via hydrolysis of EG to generate glucose. Is also able to hydrolyze cholesteryl beta-glucoside and sitosteryl beta-glucoside to generate glucose; and C6-7-nitro-2,1,3-benzoxadiazole (NBD)-GlcCer to generate C6-NBD-ceramide (Cer). In Saccharomyces cerevisiae (strain ATCC 204508 / S288c) (Baker's yeast), this protein is Ergosteryl-beta-glucosidase.